A 353-amino-acid polypeptide reads, in one-letter code: Tetraacyldisaccharide 4'-kinase (353 aa).

66 to 73 (TVGGTGKT) is a binding site for ATP.

This sequence belongs to the LpxK family.

It catalyses the reaction a lipid A disaccharide + ATP = a lipid IVA + ADP + H(+). The protein operates within glycolipid biosynthesis; lipid IV(A) biosynthesis; lipid IV(A) from (3R)-3-hydroxytetradecanoyl-[acyl-carrier-protein] and UDP-N-acetyl-alpha-D-glucosamine: step 6/6. Functionally, transfers the gamma-phosphate of ATP to the 4'-position of a tetraacyldisaccharide 1-phosphate intermediate (termed DS-1-P) to form tetraacyldisaccharide 1,4'-bis-phosphate (lipid IVA). The chain is Tetraacyldisaccharide 4'-kinase from Geobacter sulfurreducens (strain ATCC 51573 / DSM 12127 / PCA).